Here is a 509-residue protein sequence, read N- to C-terminus: Aldehyde dehydrogenase 1A1 (509 aa).

Residues 175–178 (IPWN), 201–204 (KPAE), 234–235 (GP), 254–255 (GS), and 277–279 (ELG) contribute to the NAD(+) site. Glu277 serves as the catalytic Proton acceptor. Residue Cys311 is the Nucleophile of the active site. NAD(+) is bound by residues 357–361 (EQFQK) and 408–410 (EIF).

This sequence belongs to the aldehyde dehydrogenase family. In terms of assembly, homotetramer.

Its subcellular location is the cytoplasm. It is found in the cytosol. The protein localises to the cell projection. The protein resides in the axon. It catalyses the reaction an aldehyde + NAD(+) + H2O = a carboxylate + NADH + 2 H(+). The catalysed reaction is all-trans-retinal + NAD(+) + H2O = all-trans-retinoate + NADH + 2 H(+). The enzyme catalyses 9-cis-retinal + NAD(+) + H2O = 9-cis-retinoate + NADH + 2 H(+). It carries out the reaction 11-cis-retinal + NAD(+) + H2O = 11-cis-retinoate + NADH + 2 H(+). It catalyses the reaction 13-cis-retinal + NAD(+) + H2O = 13-cis-retinoate + NADH + 2 H(+). The catalysed reaction is 3-deoxyglucosone + NAD(+) + H2O = 2-dehydro-3-deoxy-D-gluconate + NADH + 2 H(+). The enzyme catalyses (E)-4-hydroxynon-2-enal + NAD(+) + H2O = (E)-4-hydroxynon-2-enoate + NADH + 2 H(+). It carries out the reaction malonaldehyde + NAD(+) + H2O = 3-oxopropanoate + NADH + 2 H(+). It catalyses the reaction hexanal + NAD(+) + H2O = hexanoate + NADH + 2 H(+). The catalysed reaction is propanal + NAD(+) + H2O = propanoate + NADH + 2 H(+). The enzyme catalyses acetaldehyde + NAD(+) + H2O = acetate + NADH + 2 H(+). It carries out the reaction benzaldehyde + NAD(+) + H2O = benzoate + NADH + 2 H(+). It catalyses the reaction 4-aminobutanal + NAD(+) + H2O = 4-aminobutanoate + NADH + 2 H(+). The protein operates within cofactor metabolism; retinol metabolism. In terms of biological role, cytosolic dehydrogenase that catalyzes the irreversible oxidation of a wide range of aldehydes to their corresponding carboxylic acid. Functions downstream of retinol dehydrogenases and catalyzes the oxidation of retinaldehyde into retinoic acid, the second step in the oxidation of retinol/vitamin A into retinoic acid. This pathway is crucial to control the levels of retinol and retinoic acid, two important molecules which excess can be teratogenic and cytotoxic. Also oxidizes aldehydes resulting from lipid peroxidation like (E)-4-hydroxynon-2-enal/HNE, malonaldehyde and hexanal that form protein adducts and are highly cytotoxic. By participating for instance to the clearance of (E)-4-hydroxynon-2-enal/HNE in the lens epithelium prevents the formation of HNE-protein adducts and lens opacification. Also functions downstream of fructosamine-3-kinase in the fructosamine degradation pathway by catalyzing the oxidation of 3-deoxyglucosone, the carbohydrate product of fructosamine 3-phosphate decomposition, which is itself a potent glycating agent that may react with lysine and arginine side-chains of proteins. Also has an aminobutyraldehyde dehydrogenase activity and is probably part of an alternative pathway for the biosynthesis of GABA/4-aminobutanoate in midbrain, thereby playing a role in GABAergic synaptic transmission. The chain is Aldehyde dehydrogenase 1A1 from Gallus gallus (Chicken).